A 175-amino-acid chain; its full sequence is Orotate phosphoribosyltransferase (175 aa).

5-phospho-alpha-D-ribose 1-diphosphate-binding positions include Arg88, Lys89, Lys92, and 114–122 (EDVVTTARG). Orotate contacts are provided by Thr118 and Arg146.

The protein belongs to the purine/pyrimidine phosphoribosyltransferase family. PyrE subfamily. Homodimer. The cofactor is Mg(2+).

It catalyses the reaction orotidine 5'-phosphate + diphosphate = orotate + 5-phospho-alpha-D-ribose 1-diphosphate. It participates in pyrimidine metabolism; UMP biosynthesis via de novo pathway; UMP from orotate: step 1/2. In terms of biological role, catalyzes the transfer of a ribosyl phosphate group from 5-phosphoribose 1-diphosphate to orotate, leading to the formation of orotidine monophosphate (OMP). The protein is Orotate phosphoribosyltransferase of Methanocella arvoryzae (strain DSM 22066 / NBRC 105507 / MRE50).